The chain runs to 381 residues: 3-dehydroquinate synthase (381 aa).

Residues 81–86, 115–119, 139–140, Lys-152, and Lys-161 contribute to the NAD(+) site; these read EGEVSK, GVVGD, and TS. Residues Glu-194, His-256, and His-274 each coordinate Zn(2+).

Belongs to the sugar phosphate cyclases superfamily. Dehydroquinate synthase family. The cofactor is Co(2+). Requires Zn(2+) as cofactor. It depends on NAD(+) as a cofactor.

The protein resides in the cytoplasm. The catalysed reaction is 7-phospho-2-dehydro-3-deoxy-D-arabino-heptonate = 3-dehydroquinate + phosphate. It functions in the pathway metabolic intermediate biosynthesis; chorismate biosynthesis; chorismate from D-erythrose 4-phosphate and phosphoenolpyruvate: step 2/7. Functionally, catalyzes the conversion of 3-deoxy-D-arabino-heptulosonate 7-phosphate (DAHP) to dehydroquinate (DHQ). The polypeptide is 3-dehydroquinate synthase (Rhodopseudomonas palustris (strain BisA53)).